Here is an 89-residue protein sequence, read N- to C-terminus: ATP synthase subunit c, sodium ion specific (89 aa).

The next 2 membrane-spanning stretches (helical) occupy residues V9–G29 and G68–L88.

It belongs to the ATPase C chain family. In terms of assembly, F-type ATPases have 2 components, F(1) - the catalytic core - and F(0) - the membrane sodium channel. F(1) has five subunits: alpha(3), beta(3), gamma(1), delta(1), epsilon(1). F(0) has three main subunits: a(1), b(2) and c(10-14). The alpha and beta chains form an alternating ring which encloses part of the gamma chain. F(1) is attached to F(0) by a central stalk formed by the gamma and epsilon chains, while a peripheral stalk is formed by the delta and b chains.

It is found in the cell membrane. F(1)F(0) ATP synthase produces ATP from ADP in the presence of a proton or sodium gradient. F-type ATPases consist of two structural domains, F(1) containing the extramembraneous catalytic core and F(0) containing the membrane sodium channel, linked together by a central stalk and a peripheral stalk. During catalysis, ATP synthesis in the catalytic domain of F(1) is coupled via a rotary mechanism of the central stalk subunits to sodium translocation. Functionally, key component of the F(0) channel; it plays a direct role in translocation across the membrane. A homomeric c-ring of between 10-14 subunits forms the central stalk rotor element with the F(1) delta and epsilon subunits. The polypeptide is ATP synthase subunit c, sodium ion specific (atpE) (Propionigenium modestum).